A 154-amino-acid chain; its full sequence is Egg-lysin (154 aa).

The N-terminal stretch at 1-18 (MKLLVLCIFAMMATLAMS) is a signal peptide.

Monomer. Homodimer. Molecules associate into dimers and then rapidly dissociate again. Interacts (as a monomer) with the egg vitelline layer protein VERL (via VERL repeats); each VERL chain can bind multiple copies of lysin. As to expression, sperm (at protein level).

It is found in the cytoplasmic vesicle. It localises to the secretory vesicle. Its subcellular location is the acrosome lumen. Creates a 3 um hole in the egg vitelline layer through which the sperm passes. Does not have enzyme activity. Species-specific interaction between the sperm protein lysin and the egg protein VERL exposes a basic surface on lysin that may dissociate the egg vitelline layer via electrostatic repulsion. Plays a role in ensuring species-specific fertilization. This chain is Egg-lysin, found in Haliotis rufescens (California red abalone).